A 458-amino-acid chain; its full sequence is Chondroitin hydrolase (458 aa).

Positions 1-22 are cleaved as a signal peptide; it reads MVIVWYHQLLLVLLIFIGAAKG. Residues 358-401 form the EGF-like domain; that stretch reads NLDKCRMERCEGRGECYLPRPKTNPAIYNFACRCERPYFGKSCE. Disulfide bonds link Cys362–Cys373, Cys367–Cys389, and Cys391–Cys400.

The protein belongs to the glycosyl hydrolase 56 family.

In terms of biological role, endo-beta-galactosaminidase that specifically hydrolyzes chondroitin, releasing GlcUA-beta-(1-&gt;3)-GalNAc-beta-(1-&gt;4)-GlcUA-beta-(1-&gt;3)-GalNAc as the main product. Also hydrolyzes to a lesser extent chondroitin sulfates (CS-A, CS-C) and hyaluronic acid. May regulate the function of chondroitin in cell division. In Caenorhabditis elegans, this protein is Chondroitin hydrolase.